The sequence spans 521 residues: Putative FNIP repeat-containing protein L162 (521 aa).

2 FNIP repeats span residues 179–221 (FNKS…LGYK) and 222–263 (YNYP…MGGR).

This Acanthamoeba polyphaga mimivirus (APMV) protein is Putative FNIP repeat-containing protein L162.